A 128-amino-acid chain; its full sequence is Ribosome-binding factor A (128 aa).

It belongs to the RbfA family. In terms of assembly, monomer. Binds 30S ribosomal subunits, but not 50S ribosomal subunits or 70S ribosomes.

The protein resides in the cytoplasm. One of several proteins that assist in the late maturation steps of the functional core of the 30S ribosomal subunit. Associates with free 30S ribosomal subunits (but not with 30S subunits that are part of 70S ribosomes or polysomes). Required for efficient processing of 16S rRNA. May interact with the 5'-terminal helix region of 16S rRNA. This Rickettsia prowazekii (strain Madrid E) protein is Ribosome-binding factor A.